A 215-amino-acid polypeptide reads, in one-letter code: HTH-type transcriptional repressor FabR (215 aa).

An HTH tetR-type domain is found at 10 to 70; that stretch reads KTRRSLVEAA…TMVDESGLML (61 aa). The H-T-H motif DNA-binding region spans 33–52; sequence SLREVAREAGIAPTSFYRHF.

Homodimer.

The protein resides in the cytoplasm. Its function is as follows. Represses the transcription of fabB, involved in unsaturated fatty acid (UFA) biosynthesis. By controlling UFA production, FabR directly influences the physical properties of the membrane bilayer. The polypeptide is HTH-type transcriptional repressor FabR (Escherichia coli O1:K1 / APEC).